The primary structure comprises 541 residues: uncharacterized protein (541 aa).

A signal peptide spans 1–17; that stretch reads MSFSATILFSPPSGSEA. Disordered stretches follow at residues 28-47 and 103-138; these read TSQGSTGSQGGNPPASTPIT and GKVCTADEDRESRARTPPPEEPGVLKGSPGEASNSL. Basic and acidic residues predominate over residues 103–116; the sequence is GKVCTADEDRESRA. The residue at position 118 (T118) is a Phosphothreonine. Glycyl lysine isopeptide (Lys-Gly) (interchain with G-Cter in SUMO2) cross-links involve residues K128 and K223. S226 carries the phosphoserine modification. Positions 232-243 are enriched in polar residues; sequence AIQRASSETGPE. The tract at residues 232 to 254 is disordered; it reads AIQRASSETGPESGTKLPATRPE. Residues S286 and S429 each carry the phosphoserine modification. The tract at residues 494 to 526 is disordered; that stretch reads YNPNFQEDEGGGNEKGPVSPSYDQPHKTSCPDL.

Its subcellular location is the secreted. This is an uncharacterized protein from Mus musculus (Mouse).